A 542-amino-acid chain; its full sequence is CTP synthase (542 aa).

The interval 1 to 265 (MARYVFITGG…DDEVLAAFGI (265 aa)) is amidoligase domain. Ser13 is a binding site for CTP. Ser13 is a UTP binding site. ATP-binding positions include 14-19 (SLGKGI) and Asp71. 2 residues coordinate Mg(2+): Asp71 and Glu139. CTP-binding positions include 146-148 (DIE), 186-191 (KTKPTQ), and Lys222. Residues 186–191 (KTKPTQ) and Lys222 contribute to the UTP site. One can recognise a Glutamine amidotransferase type-1 domain in the interval 291 to 541 (TIAIVGKYTG…IEAATEQSRL (251 aa)). Gly353 is an L-glutamine binding site. The Nucleophile; for glutamine hydrolysis role is filled by Cys380. L-glutamine is bound by residues 381 to 384 (FGMQ), Glu404, and Arg469. Residues His514 and Glu516 contribute to the active site.

It belongs to the CTP synthase family. Homotetramer.

It carries out the reaction UTP + L-glutamine + ATP + H2O = CTP + L-glutamate + ADP + phosphate + 2 H(+). It catalyses the reaction L-glutamine + H2O = L-glutamate + NH4(+). The enzyme catalyses UTP + NH4(+) + ATP = CTP + ADP + phosphate + 2 H(+). The protein operates within pyrimidine metabolism; CTP biosynthesis via de novo pathway; CTP from UDP: step 2/2. Its activity is regulated as follows. Allosterically activated by GTP, when glutamine is the substrate; GTP has no effect on the reaction when ammonia is the substrate. The allosteric effector GTP functions by stabilizing the protein conformation that binds the tetrahedral intermediate(s) formed during glutamine hydrolysis. Inhibited by the product CTP, via allosteric rather than competitive inhibition. Catalyzes the ATP-dependent amination of UTP to CTP with either L-glutamine or ammonia as the source of nitrogen. Regulates intracellular CTP levels through interactions with the four ribonucleotide triphosphates. In Rhizobium etli (strain CIAT 652), this protein is CTP synthase.